The sequence spans 379 residues: Pectin lyase A (379 aa).

The N-terminal stretch at 1–20 (MKTTFLVSLATAALSSTAAA) is a signal peptide. Disulfide bonds link Cys-83/Cys-102 and Cys-92/Cys-226. Arg-256 is a catalytic residue. The cysteines at positions 323 and 331 are disulfide-linked.

This sequence belongs to the polysaccharide lyase 1 family.

It is found in the secreted. It carries out the reaction Eliminative cleavage of (1-&gt;4)-alpha-D-galacturonan methyl ester to give oligosaccharides with 4-deoxy-6-O-methyl-alpha-D-galact-4-enuronosyl groups at their non-reducing ends.. In terms of biological role, pectinolytic enzymes consist of four classes of enzymes: pectin lyase, polygalacturonase, pectin methylesterase and rhamnogalacturonase. Among pectinolytic enzymes, pectin lyase is the most important in depolymerization of pectin, since it cleaves internal glycosidic bonds of highly methylated pectins. The chain is Pectin lyase A (pelA) from Emericella nidulans (strain FGSC A4 / ATCC 38163 / CBS 112.46 / NRRL 194 / M139) (Aspergillus nidulans).